A 276-amino-acid polypeptide reads, in one-letter code: Diaminopimelate epimerase (276 aa).

Substrate-binding residues include Asn13, Gln46, and Asn66. Cys75 serves as the catalytic Proton donor. Residues 76–77 (GN), Asn159, Asn192, and 210–211 (ER) contribute to the substrate site. The Proton acceptor role is filled by Cys219. Residue 220–221 (GT) participates in substrate binding.

This sequence belongs to the diaminopimelate epimerase family. In terms of assembly, homodimer.

The protein resides in the cytoplasm. The catalysed reaction is (2S,6S)-2,6-diaminopimelate = meso-2,6-diaminopimelate. It participates in amino-acid biosynthesis; L-lysine biosynthesis via DAP pathway; DL-2,6-diaminopimelate from LL-2,6-diaminopimelate: step 1/1. In terms of biological role, catalyzes the stereoinversion of LL-2,6-diaminopimelate (L,L-DAP) to meso-diaminopimelate (meso-DAP), a precursor of L-lysine and an essential component of the bacterial peptidoglycan. This is Diaminopimelate epimerase from Pseudomonas entomophila (strain L48).